A 412-amino-acid polypeptide reads, in one-letter code: Polyferredoxin protein MvhB (412 aa).

4Fe-4S ferredoxin-type domains are found at residues 2-29 (IVIN…VKPE), 30-57 (DVIY…HEDI), 66-95 (KKIT…LVND), 96-127 (GKAS…IEGV), 138-166 (DKPI…LPKY), 168-197 (ESIE…ISGK), 207-236 (ENFT…PKSD), 237-265 (LTVS…LEVK), 275-304 (EGIV…VVSP), 311-344 (GLKK…LVEV), 356-385 (NRIQ…LTDD), and 386-412 (EKLP…LLIK). [4Fe-4S] cluster is bound by residues Cys9, Cys12, Cys15, and Cys19. [4Fe-4S] cluster-binding residues include Cys75, Cys78, Cys81, Cys85, Cys107, Cys110, Cys113, Cys117, Cys146, Cys149, Cys152, Cys156, Cys177, Cys180, Cys183, Cys187, Cys216, Cys219, Cys222, Cys226, Cys245, Cys248, Cys251, Cys255, Cys284, Cys287, Cys290, Cys294, Cys324, Cys327, Cys330, Cys334, Cys365, Cys368, Cys371, and Cys375.

The cofactor is [4Fe-4S] cluster.

The polypeptide is Polyferredoxin protein MvhB (mvhB) (Methanothermus fervidus).